Here is a 104-residue protein sequence, read N- to C-terminus: MAAKIRRDDEVIVLTGKDKGKRGKVKNVLSASKVIVEGINLVKKHQKPVPALNQPGGIVEKEAAIQVSNLAIFNAATGKADRVGFRFEDGKKVRFFKSNSETIK.

It belongs to the universal ribosomal protein uL24 family. In terms of assembly, part of the 50S ribosomal subunit.

One of two assembly initiator proteins, it binds directly to the 5'-end of the 23S rRNA, where it nucleates assembly of the 50S subunit. Functionally, one of the proteins that surrounds the polypeptide exit tunnel on the outside of the subunit. This Pectobacterium atrosepticum (strain SCRI 1043 / ATCC BAA-672) (Erwinia carotovora subsp. atroseptica) protein is Large ribosomal subunit protein uL24.